The following is a 234-amino-acid chain: Glucosamine-6-phosphate deaminase (234 aa).

D63 acts as the Proton acceptor; for enolization step in catalysis. N129 functions as the For ring-opening step in the catalytic mechanism. Catalysis depends on H131, which acts as the Proton acceptor; for ring-opening step. E136 (for ring-opening step) is an active-site residue.

This sequence belongs to the glucosamine/galactosamine-6-phosphate isomerase family. NagB subfamily.

It carries out the reaction alpha-D-glucosamine 6-phosphate + H2O = beta-D-fructose 6-phosphate + NH4(+). It functions in the pathway amino-sugar metabolism; N-acetylneuraminate degradation; D-fructose 6-phosphate from N-acetylneuraminate: step 5/5. Functionally, catalyzes the reversible isomerization-deamination of glucosamine 6-phosphate (GlcN6P) to form fructose 6-phosphate (Fru6P) and ammonium ion. The sequence is that of Glucosamine-6-phosphate deaminase from Listeria monocytogenes serotype 4b (strain CLIP80459).